The sequence spans 285 residues: MRQVTERNAMRELSRAWRARGERIGLVPTMGNLHRGHLELVERLARRVDRLVVSIFVNPLQFGPGEDYDAYPRTLEADLNALEGRGVDAVFAPNAREMYPGVEPPWTGVDVPALTQTLCGAARPGHFAGVAVVVIKLLNIVEPDVAAFGRKDYQQLQVIRRVVGDLDLSVEIVEVPIVREADGLALSSRNGYMDGEQRRRAPALYATLCEVAAALEAGRRDWSQLEAQACRRLEAAGFDAAEYVAVRRCDDLAEPQGDEPRLVCLGAARLGAARLIDNVEARLKR.

Residue M30–H37 participates in ATP binding. The Proton donor role is filled by H37. Q61 lines the (R)-pantoate pocket. A beta-alanine-binding site is contributed by Q61. G149–D152 serves as a coordination point for ATP. Q155 serves as a coordination point for (R)-pantoate. ATP is bound by residues V178 and L186–R189.

The protein belongs to the pantothenate synthetase family. Homodimer.

It is found in the cytoplasm. It catalyses the reaction (R)-pantoate + beta-alanine + ATP = (R)-pantothenate + AMP + diphosphate + H(+). Its pathway is cofactor biosynthesis; (R)-pantothenate biosynthesis; (R)-pantothenate from (R)-pantoate and beta-alanine: step 1/1. Functionally, catalyzes the condensation of pantoate with beta-alanine in an ATP-dependent reaction via a pantoyl-adenylate intermediate. This Halorhodospira halophila (strain DSM 244 / SL1) (Ectothiorhodospira halophila (strain DSM 244 / SL1)) protein is Pantothenate synthetase.